We begin with the raw amino-acid sequence, 301 residues long: D-alanine--D-alanine ligase (301 aa).

Residues 99–293 form the ATP-grasp domain; that stretch reads KRILAFGNVR…FEELLDTIIE (195 aa). 126-181 contributes to the ATP binding site; that stretch reads IENLGYPVFIKPNNGGSSVATTLVESKEAVKDAVLEALKYDTEVMIEEYIKGDEIT. Positions 248, 260, and 262 each coordinate Mg(2+).

Belongs to the D-alanine--D-alanine ligase family. Mg(2+) is required as a cofactor. The cofactor is Mn(2+).

It is found in the cytoplasm. The enzyme catalyses 2 D-alanine + ATP = D-alanyl-D-alanine + ADP + phosphate + H(+). The protein operates within cell wall biogenesis; peptidoglycan biosynthesis. Cell wall formation. The polypeptide is D-alanine--D-alanine ligase (Clostridium perfringens (strain SM101 / Type A)).